Here is a 696-residue protein sequence, read N- to C-terminus: MAQAGPTPQQAIARLRAEIEQHNIRYYVHDDPSVPDAEYDALMRDLQALEAEHPELVTPDSPTQRVGAAPLAEFGSVRHAVPMLSLGNAFDEEDVRAFDKRVADTLRGAGLLGLDQQVEYFCELKLDGLAISLCYEEGRLAQAATRGDGQTGEDVTANIRTIKGVPLRLHGAPRVLEVRGEVLMNRAEFERLNRTQAARGEKVFVNPRNAAAGSLRQLDPRITAQRPLRFFAYSWGEVHGLPEGMPTRFDEPAPGVRVASTLPRDTHGGMLDWLAELGLPVNLRHNHRERGADGLLAFYERIGKLRADLPYDIDGVVYKVDALPSQRVLGFVARAPRFALAHKFPAEEAVTQLLGIEVQVGRTGAITPVARLAPVFVGGVTVTNATLHNEDEIRRKDVRIGDTVIVRRAGDVIPEVVGPVLEKRPADAREFVMLTACPICGSAIERPEGEAIARCTGGLFCAAQRKQTLLHAAGRKALDIEGLGEKLIDQLVDADRVKSLADIYSLTAFELAALERMGKKSAENLVAAIDQARRPALGRLLFALGIRHVGETTARDVARHFGSMERIMDASEEALLAVPDVGGVVAGSIRRFFAEPHNREIVEQLTQQGVHPQAEAEPEGTSLAGKTFVLTGTMPNWTRDEATRRILAAGGKVSGSVSKKTAYLVTGEDAGSKLTKAQELGVPVLDEDGLKALLGL.

NAD(+) contacts are provided by residues 36-40, 85-86, and Glu-123; these read DAEYD and SL. The N6-AMP-lysine intermediate role is filled by Lys-125. Residues Arg-146, Glu-181, Lys-319, and Lys-343 each contribute to the NAD(+) site. Residues Cys-437, Cys-440, Cys-455, and Cys-461 each coordinate Zn(2+). A BRCT domain is found at 618 to 696; the sequence is PEGTSLAGKT…EDGLKALLGL (79 aa).

The protein belongs to the NAD-dependent DNA ligase family. LigA subfamily. Mg(2+) serves as cofactor. Mn(2+) is required as a cofactor.

It catalyses the reaction NAD(+) + (deoxyribonucleotide)n-3'-hydroxyl + 5'-phospho-(deoxyribonucleotide)m = (deoxyribonucleotide)n+m + AMP + beta-nicotinamide D-nucleotide.. Functionally, DNA ligase that catalyzes the formation of phosphodiester linkages between 5'-phosphoryl and 3'-hydroxyl groups in double-stranded DNA using NAD as a coenzyme and as the energy source for the reaction. It is essential for DNA replication and repair of damaged DNA. This Bordetella parapertussis (strain 12822 / ATCC BAA-587 / NCTC 13253) protein is DNA ligase.